Reading from the N-terminus, the 68-residue chain is Glucagon-1 (68 aa).

It belongs to the glucagon family.

It is found in the secreted. Its function is as follows. Promotes hydrolysis of glycogen and lipids, and raises the blood sugar level. This is Glucagon-1 (gcg) from Oncorhynchus kisutch (Coho salmon).